Here is a 444-residue protein sequence, read N- to C-terminus: F-box protein At1g53790 (444 aa).

In terms of domain architecture, F-box spans 76–125 (VSCFRYIPIDLLMDIFSRVPAKSIARFRCVSKLWESILCRPDFKELFMTM).

The protein is F-box protein At1g53790 of Arabidopsis thaliana (Mouse-ear cress).